The sequence spans 294 residues: 4-hydroxy-tetrahydrodipicolinate synthase (294 aa).

Residue T47 coordinates pyruvate. The active-site Proton donor/acceptor is Y136. K164 functions as the Schiff-base intermediate with substrate in the catalytic mechanism. V206 serves as a coordination point for pyruvate.

It belongs to the DapA family. As to quaternary structure, homotetramer; dimer of dimers.

Its subcellular location is the cytoplasm. It carries out the reaction L-aspartate 4-semialdehyde + pyruvate = (2S,4S)-4-hydroxy-2,3,4,5-tetrahydrodipicolinate + H2O + H(+). The protein operates within amino-acid biosynthesis; L-lysine biosynthesis via DAP pathway; (S)-tetrahydrodipicolinate from L-aspartate: step 3/4. Catalyzes the condensation of (S)-aspartate-beta-semialdehyde [(S)-ASA] and pyruvate to 4-hydroxy-tetrahydrodipicolinate (HTPA). This Nostoc punctiforme (strain ATCC 29133 / PCC 73102) protein is 4-hydroxy-tetrahydrodipicolinate synthase.